We begin with the raw amino-acid sequence, 369 residues long: MPERDPILLTPGPLTTSRMTRDAMLRDWGSWDAAFNRLTKSVCADLVRIAGGGDAYVCVPLQGSGTFAVEATLGTLVPRDARVLVPNNGAYCARIAAILRRLGIAHVELPFAEDEPASAHAIDAALARDARLTHVALVHLETSAGLLNPLDDIAAVCRARGRALIVDAMSSFGALPIALAASDIDALISASGKCLEGVPGMGFAIVRRSALEAAEGRSPSVALDLHDQYAYMQRTSQWRFTPPTHVLAALRAALDQFFDEGGQPARGARYARNCATLVDGMRALGFEPFLDARAQASVIVTFYAPADPAYAFPAFYAAVRDAGYVLYPGKLTTADTFRVGCIGALGADEMRGAVAAIGGALESLGIAMR.

An N6-(pyridoxal phosphate)lysine modification is found at lysine 193.

The protein belongs to the class-V pyridoxal-phosphate-dependent aminotransferase family. PhnW subfamily. Homodimer. Requires pyridoxal 5'-phosphate as cofactor.

It catalyses the reaction (2-aminoethyl)phosphonate + pyruvate = phosphonoacetaldehyde + L-alanine. Functionally, involved in phosphonate degradation. In Burkholderia pseudomallei (strain K96243), this protein is 2-aminoethylphosphonate--pyruvate transaminase.